The chain runs to 475 residues: MLRIAILGRPNVGKSSLFNRMCKQSLAIVNSQEGTTRDRLYGEIRGWSVPVQVIDTGGVDKDSEDHFQKHIYKQALAGAGEADILLLVIDIRCGITEQDAAIAKQLLPLKKPLILVANKADTLKDEHHVHELYKIGISEILTVSASHDKHIDRLLQKIKTLANIPEIAEEPVEEIEEEAQISSHEILSPEESLSDYEEEEILFSKPPASDKPLKIALIGRPNVGKSSIINGLLNEERCIIDNIPGTTRDNVDILYSHNDRSYLFIDTAGLRKMKSVKNSIEWISSSRTEKAIARADICLLVIDATHCLSSYDKRILSLISKHKKPHIILANKWDLIKGVRMEHYIRDLRSTDVYIGQSRILCISAAKKRNLRHIFSSIDELHETVSRKVPTPVVNKTLASALQKHHPQVINGRRLRIYYAIHKTATPFQFLLFINAKSLLTKHYECYLKNTLKTSFNLYGIPFDLEIKEKAKRTN.

EngA-type G domains lie at 2–166 (LRIA…NIPE) and 213–386 (LKIA…ETVS). GTP-binding positions include 8-15 (GRPNVGKS), 55-59 (DTGGV), 118-121 (NKAD), 219-226 (GRPNVGKS), 266-270 (DTAGL), and 331-334 (NKWD). Residues 387–471 (RKVPTPVVNK…PFDLEIKEKA (85 aa)) enclose the KH-like domain.

The protein belongs to the TRAFAC class TrmE-Era-EngA-EngB-Septin-like GTPase superfamily. EngA (Der) GTPase family. In terms of assembly, associates with the 50S ribosomal subunit.

GTPase that plays an essential role in the late steps of ribosome biogenesis. This Chlamydia felis (strain Fe/C-56) (Chlamydophila felis) protein is GTPase Der.